The primary structure comprises 577 residues: Aspartate--tRNA(Asp) ligase (577 aa).

Glu-172 contacts L-aspartate. The tract at residues 196–199 is aspartate; that stretch reads QLFK. Arg-218 contacts L-aspartate. Residues 218-220 and Gln-227 contribute to the ATP site; that span reads RDE. His-438 lines the L-aspartate pocket. Glu-473 lines the ATP pocket. Arg-480 serves as a coordination point for L-aspartate. 525–528 provides a ligand contact to ATP; the sequence is GFDR.

Belongs to the class-II aminoacyl-tRNA synthetase family. Type 1 subfamily. Homodimer.

It localises to the cytoplasm. The catalysed reaction is tRNA(Asp) + L-aspartate + ATP = L-aspartyl-tRNA(Asp) + AMP + diphosphate. In terms of biological role, catalyzes the attachment of L-aspartate to tRNA(Asp) in a two-step reaction: L-aspartate is first activated by ATP to form Asp-AMP and then transferred to the acceptor end of tRNA(Asp). Is specific for tRNA(Asp) since it cannot aspartylate tRNA(Asn). The sequence is that of Aspartate--tRNA(Asp) ligase (aspS1) from Deinococcus radiodurans (strain ATCC 13939 / DSM 20539 / JCM 16871 / CCUG 27074 / LMG 4051 / NBRC 15346 / NCIMB 9279 / VKM B-1422 / R1).